Here is a 285-residue protein sequence, read N- to C-terminus: NADPH-dependent 7-cyano-7-deazaguanine reductase (285 aa).

Isoleucine 91–serine 93 lines the substrate pocket. NADPH is bound at residue serine 93–lysine 94. The active-site Thioimide intermediate is cysteine 191. Aspartate 198 serves as the catalytic Proton donor. Residue histidine 230 to glutamate 231 coordinates substrate. NADPH is bound at residue arginine 259–glycine 260.

The protein belongs to the GTP cyclohydrolase I family. QueF type 2 subfamily. Homodimer.

It localises to the cytoplasm. The enzyme catalyses 7-aminomethyl-7-carbaguanine + 2 NADP(+) = 7-cyano-7-deazaguanine + 2 NADPH + 3 H(+). It participates in tRNA modification; tRNA-queuosine biosynthesis. In terms of biological role, catalyzes the NADPH-dependent reduction of 7-cyano-7-deazaguanine (preQ0) to 7-aminomethyl-7-deazaguanine (preQ1). The polypeptide is NADPH-dependent 7-cyano-7-deazaguanine reductase (Legionella pneumophila (strain Lens)).